The chain runs to 311 residues: Glycine--tRNA ligase alpha subunit (311 aa).

The protein belongs to the class-II aminoacyl-tRNA synthetase family. Tetramer of two alpha and two beta subunits.

Its subcellular location is the cytoplasm. It carries out the reaction tRNA(Gly) + glycine + ATP = glycyl-tRNA(Gly) + AMP + diphosphate. The chain is Glycine--tRNA ligase alpha subunit from Rhizobium meliloti (strain 1021) (Ensifer meliloti).